The primary structure comprises 940 residues: MQIKAQDTGQQKKSCLLSNIRNKWKNRNRGSFRQWVGKLSNGLMIPIAVLPIAGIFLGVGDAIAGNAGDLTGLRYFGLFIKNGGDVVFANLPILFAIAIAITFSQDAGVAGFSAFVFWAAMNGFMSSLILPFDKAGKIITDTSTPIAGFKVLYNKSVPVHAIATTLGLRTLSTSVFGGIIVGALTSVLYKKFYAIRLPDVIGFFSGTRFVPIICFVVAIPVALILLMIWPAVSIGLNAIGTGLGFLGGKGYGANSLIFGYIERSLIPFGVHHAFYAPLWYTSAGGSLQEIVNQQVWIRPDFHLSDNYVARVIGWVDPNNSSMYIIPGALNGQNGSSTGNTMSKDLNGALSAYMSKESTAFLTWKDLVDGLTFKGNFDKMAENGLLDGSNKIWLGLNGSGILGKKLLLSDGNVYTITFKTFANTTPIAWSKGAQAVLPLNASSTIVNNPTALAAATQSNNNTNNIKLYPVNSFRVAVESLNPAQYSQGKFPFMLFGIPAAGVAMILAAPKDRRKEAASIVGSAAFTSFLTGITEPFEFTFLFLAPWLFYGVHAVLAAVSFWLMNILGANVGQTFSGSFIDFILYGALPDGRRWLANSYLVPIIGLFLAAIYFPTFYFLIKHFNLATPGRGGKLITKKEYLASKAAAKAEGVSGVAENFTQTQIEAGILLQAYGGKENIVELGACITKLRVTVKNPELVKEEPIKELGAAGVMRTTPTFFVAVFGTRAAVYKSAMQDIIQGKVNWEALQKVINTDQLAVEPKETTPPKEVMPVVQDEIVILSPVNGTLKSLNQVPDETFKQKLVGEGVAIVPSDGHFKAPGEAGVKTELAFPGGHAYIFDIDGIKVMLHIGIDTVQINAKKQPGEPLEVFDIKTKQGEYTKEKSESVVEVDLKKLSKKYNPITPFVVMKESLENFKLVPIRQRGEIKVGQPIFKLVYKKSQA.

Residues 1 to 284 (MQIKAQDTGQ…YAPLWYTSAG (284 aa)) form the PTS EIIC type-1; first part domain. A run of 5 helical transmembrane segments spans residues 43–63 (LMIPIAVLPIAGIFLGVGDAI), 83–103 (GGDVVFANLPILFAIAIAITF), 112–132 (FSAFVFWAAMNGFMSSLILPF), 175–195 (VFGGIIVGALTSVLYKKFYAI), and 209–229 (FVPIICFVVAIPVALILLMIW). Residues 285-478 (GSLQEIVNQQ…VNSFRVAVES (194 aa)) form a unknown region. The 152-residue stretch at 479–630 (LNPAQYSQGK…FNLATPGRGG (152 aa)) folds into the PTS EIIC type-1; second part domain. 5 consecutive transmembrane segments (helical) span residues 487 to 507 (GKFPFMLFGIPAAGVAMILAA), 515 to 535 (AASIVGSAAFTSFLTGITEPF), 537 to 557 (FTFLFLAPWLFYGVHAVLAAV), 564 to 584 (ILGANVGQTFSGSFIDFILYG), and 598 to 618 (LVPIIGLFLAAIYFPTFYFLI). In terms of domain architecture, PTS EIIB type-1 spans 661–743 (QIEAGILLQA…QDIIQGKVNW (83 aa)). Cys683 functions as the Phosphocysteine intermediate; for EIIB activity in the catalytic mechanism. A PTS EIIA type-1 domain is found at 794–907 (DETFKQKLVG…NPITPFVVMK (114 aa)). His847 acts as the Tele-phosphohistidine intermediate; for EIIA activity in catalysis.

It localises to the cell membrane. It carries out the reaction N(pros)-phospho-L-histidyl-[protein] + D-glucose(out) = D-glucose 6-phosphate(in) + L-histidyl-[protein]. In terms of biological role, the phosphoenolpyruvate-dependent sugar phosphotransferase system (sugar PTS), a major carbohydrate active transport system, catalyzes the phosphorylation of incoming sugar substrates concomitantly with their translocation across the cell membrane. This system is involved in glucose transport. The sequence is that of PTS system glucose-specific EIICBA component (ptsG) from Mycoplasma pneumoniae (strain ATCC 29342 / M129 / Subtype 1) (Mycoplasmoides pneumoniae).